The following is a 583-amino-acid chain: uncharacterized protein (583 aa).

Position 24–140 (24–140 (ILADIDDEQL…SAMLRAMARM (117 aa))) interacts with a nucleoside 3',5'-cyclic phosphate. In terms of domain architecture, PNPLA spans 309-469 (LVMAGGGARG…LNNLPANVMC (161 aa)). A GXGXXG motif is present at residues 313 to 318 (GGGARG). The GXSXG motif lies at 340–344 (GTSSG). Ser342 acts as the Nucleophile in catalysis. Asp456 (proton acceptor) is an active-site residue. The DGA/G signature appears at 456-458 (DGG).

This sequence belongs to the NTE family.

This is an uncharacterized protein from Mycobacterium bovis (strain ATCC BAA-935 / AF2122/97).